Consider the following 254-residue polypeptide: 3-deoxy-manno-octulosonate cytidylyltransferase (254 aa).

The protein belongs to the KdsB family.

It is found in the cytoplasm. It carries out the reaction 3-deoxy-alpha-D-manno-oct-2-ulosonate + CTP = CMP-3-deoxy-beta-D-manno-octulosonate + diphosphate. It participates in nucleotide-sugar biosynthesis; CMP-3-deoxy-D-manno-octulosonate biosynthesis; CMP-3-deoxy-D-manno-octulosonate from 3-deoxy-D-manno-octulosonate and CTP: step 1/1. Its pathway is bacterial outer membrane biogenesis; lipopolysaccharide biosynthesis. Activates KDO (a required 8-carbon sugar) for incorporation into bacterial lipopolysaccharide in Gram-negative bacteria. The chain is 3-deoxy-manno-octulosonate cytidylyltransferase from Bordetella petrii (strain ATCC BAA-461 / DSM 12804 / CCUG 43448).